The following is a 318-amino-acid chain: Aspartate carbamoyltransferase catalytic subunit (318 aa).

Positions 54 and 55 each coordinate carbamoyl phosphate. K82 is an L-aspartate binding site. Carbamoyl phosphate contacts are provided by R104, H134, and Q137. L-aspartate is bound by residues R174 and R230. G271 and P272 together coordinate carbamoyl phosphate.

The protein belongs to the aspartate/ornithine carbamoyltransferase superfamily. ATCase family. Heterododecamer (2C3:3R2) of six catalytic PyrB chains organized as two trimers (C3), and six regulatory PyrI chains organized as three dimers (R2).

The catalysed reaction is carbamoyl phosphate + L-aspartate = N-carbamoyl-L-aspartate + phosphate + H(+). The protein operates within pyrimidine metabolism; UMP biosynthesis via de novo pathway; (S)-dihydroorotate from bicarbonate: step 2/3. Its function is as follows. Catalyzes the condensation of carbamoyl phosphate and aspartate to form carbamoyl aspartate and inorganic phosphate, the committed step in the de novo pyrimidine nucleotide biosynthesis pathway. The protein is Aspartate carbamoyltransferase catalytic subunit of Clavibacter michiganensis subsp. michiganensis (strain NCPPB 382).